Here is a 347-residue protein sequence, read N- to C-terminus: NADH-ubiquinone oxidoreductase chain 2 (347 aa).

The next 11 membrane-spanning stretches (helical) occupy residues 3–23, 25–45, 59–79, 96–116, 122–142, 148–168, 178–198, 202–222, 240–260, 276–296, and 326–346; these read PLIL…VMMS, HWLM…PLLM, YFLT…INLM, IIMT…FWVP, ISLT…LSIL, VINP…GGWG, ILAY…AFNP, LLNL…FMVA, ITTS…LAGF, IILA…YIRL, and LPPL…MILL.

This sequence belongs to the complex I subunit 2 family. Core subunit of respiratory chain NADH dehydrogenase (Complex I) which is composed of 45 different subunits. Interacts with TMEM242.

Its subcellular location is the mitochondrion inner membrane. It catalyses the reaction a ubiquinone + NADH + 5 H(+)(in) = a ubiquinol + NAD(+) + 4 H(+)(out). Its function is as follows. Core subunit of the mitochondrial membrane respiratory chain NADH dehydrogenase (Complex I) which catalyzes electron transfer from NADH through the respiratory chain, using ubiquinone as an electron acceptor. Essential for the catalytic activity and assembly of complex I. The protein is NADH-ubiquinone oxidoreductase chain 2 of Peropteryx kappleri (Greater dog-like bat).